The sequence spans 510 residues: GMP synthase [glutamine-hydrolyzing] (510 aa).

A Glutamine amidotransferase type-1 domain is found at 5–195; that stretch reads LVLILDFGGQ…LYEVCHCQGD (191 aa). Residue Cys82 is the Nucleophile of the active site. Catalysis depends on residues His169 and Glu171. A GMPS ATP-PPase domain is found at 196-385; it reads WTMENYIEKE…LGVPEEIVWR (190 aa). 223–229 contributes to the ATP binding site; that stretch reads SGGVDSS.

Homodimer.

It carries out the reaction XMP + L-glutamine + ATP + H2O = GMP + L-glutamate + AMP + diphosphate + 2 H(+). It functions in the pathway purine metabolism; GMP biosynthesis; GMP from XMP (L-Gln route): step 1/1. Catalyzes the synthesis of GMP from XMP. The polypeptide is GMP synthase [glutamine-hydrolyzing] (Alkaliphilus metalliredigens (strain QYMF)).